The following is a 345-amino-acid chain: Opioid-binding protein/cell adhesion molecule (345 aa).

The N-terminal stretch at 1-27 is a signal peptide; that stretch reads MGVCGSLFQPWKCLVVVSLRLLFLVPT. 3 Ig-like C2-type domains span residues 39-126, 136-219, and 223-310; these read PKAM…PKTS, PQIM…VKIT, and PPYI…ASIT. N-linked (GlcNAc...) asparagine glycans are attached at residues N44, N70, and N140. C57 and C115 are oxidised to a cystine. 2 cysteine pairs are disulfide-bonded: C157–C202 and C244–C296. 3 N-linked (GlcNAc...) asparagine glycosylation sites follow: N285, N293, and N306. Residue N322 is the site of GPI-anchor amidated asparagine attachment. Residues 323–345 constitute a propeptide, removed in mature form; it reads SASRALACLWLSGTLFAHFFIKF.

It belongs to the immunoglobulin superfamily. IgLON family.

The protein localises to the cell membrane. In terms of biological role, binds opioids in the presence of acidic lipids; probably involved in cell contact. The sequence is that of Opioid-binding protein/cell adhesion molecule (OPCML) from Bos taurus (Bovine).